The primary structure comprises 338 residues: Mitochondrial transcription factor 1 (338 aa).

Residues Leu-23, Asp-76, Asp-100, and Asn-136 each coordinate S-adenosyl-L-methionine.

This sequence belongs to the class I-like SAM-binding methyltransferase superfamily. rRNA adenine N(6)-methyltransferase family.

It localises to the mitochondrion. Mitochondrial transcription factor that confers selective promoter recognition on the core subunit of the yeast mitochondrial RNA polymerase. Interacts with DNA in a non-specific manner. This is Mitochondrial transcription factor 1 (MTF1) from Lachancea kluyveri (Yeast).